The chain runs to 123 residues: Protein Wnt-7a (123 aa).

Ser1 is lipidated: O-palmitoleoyl serine; by PORCN. The tract at residues 33 to 61 (VEPVRASRNKRPTFLKIKKPLSYLKPMDT) is disordered linker. Cys89 and Cys104 are joined by a disulfide. A glycan (N-linked (GlcNAc...) asparagine) is linked at Asn90.

The protein belongs to the Wnt family. Post-translationally, palmitoleoylation is required for efficient binding to frizzled receptors. Depalmitoleoylation leads to Wnt signaling pathway inhibition.

The protein localises to the secreted. Its subcellular location is the extracellular space. It localises to the extracellular matrix. Its function is as follows. Ligand for members of the frizzled family of seven transmembrane receptors that functions in the canonical Wnt/beta-catenin signaling pathway. Plays an important role in embryonic development, including dorsal versus ventral patterning during limb development, skeleton development and urogenital tract development. Required for central nervous system (CNS) angiogenesis and blood-brain barrier regulation. This is Protein Wnt-7a (WNT-7A) from Plethodon jordani (Red-cheeked salamander).